We begin with the raw amino-acid sequence, 207 residues long: N-(5'-phosphoribosyl)anthranilate isomerase (207 aa).

It belongs to the TrpF family.

It carries out the reaction N-(5-phospho-beta-D-ribosyl)anthranilate = 1-(2-carboxyphenylamino)-1-deoxy-D-ribulose 5-phosphate. It functions in the pathway amino-acid biosynthesis; L-tryptophan biosynthesis; L-tryptophan from chorismate: step 3/5. This Legionella pneumophila (strain Paris) protein is N-(5'-phosphoribosyl)anthranilate isomerase.